The sequence spans 566 residues: Protein OBERON 1 (566 aa).

A compositionally biased stretch (polar residues) spans 1–10; sequence MGTSSGSNLP. Residues 1–79 are disordered; the sequence is MGTSSGSNLP…KTGPDSHDQH (79 aa). The span at 18–29 shows a compositional bias: low complexity; the sequence is QQLQTSLSLVSS. The span at 47–60 shows a compositional bias: polar residues; it reads ESASSQETWPTSKS. Residues 64–79 show a composition bias toward basic and acidic residues; the sequence is RKTDSGKTGPDSHDQH. A PHD-type zinc finger spans residues 225–289; sequence LCMCVICNKF…LFKCRACNHT (65 aa). The stretch at 407–522 forms a coiled coil; sequence EEKTRMYKKA…LFEKIKEQES (116 aa). A disordered region spans residues 545 to 566; sequence YNASSPRVDPRSNQRNPFRSNP. Positions 555–566 are enriched in polar residues; the sequence is RSNQRNPFRSNP.

As to quaternary structure, self-interacts. Interacts with OBE2, OBE3 and OBE4. Binds to VPg of pea seed borne mosaic virus (PSbMV), turnip mosaic virus (TuMV) and lettuce mosaic virus (LMV), but not with VPg of tobacco etch virus (TEV), cowpea mosaic virus (CPMV), tomato black ring virus (TBRV) and grapevine fan leaf virus (GFLV). Interacts with RBL. Expressed in roots, seedlings, stems, leaves, flowers and siliques, especially in the vasculature.

It localises to the nucleus. It is found in the nucleoplasm. Probable transcription factor that acts together with OBE2 for the maintenance and/or establishment of both the shoot and root meristems, probably by controlling the expression of the meristem genes such as WUS, PLT1 and PLT2 and of genes required for auxin responses. Promotes cell meristematic activity via the WUSCHEL-CLAVATA pathway. Involved in the development of the basal pole and in auxin-mediated root and vascular development in the embryo. Confers sensitivity to turnip mosaic virus (TuMV) probably by promoting viral movement and multiplication via interaction with TuMV VPg. In Arabidopsis thaliana (Mouse-ear cress), this protein is Protein OBERON 1.